Reading from the N-terminus, the 1741-residue chain is DNA-directed RNA polymerase III subunit RPC1 (1741 aa).

Residues Cys-79, Cys-82, Cys-89, His-92, Cys-119, Cys-122, and Cys-160 each contribute to the Zn(2+) site. Mg(2+) is bound by residues Asp-722, Asp-724, and Asp-726. The tract at residues 1099–1111 (PFEFLAHARAGRD) is bridging helix. The segment at 1719 to 1741 (RHANKRSWSRGKERHASLKPKNR) is disordered.

The protein belongs to the RNA polymerase beta' chain family. Component of the RNA polymerase III (Pol III) complex consisting of 17 subunits.

The protein resides in the nucleus. The catalysed reaction is RNA(n) + a ribonucleoside 5'-triphosphate = RNA(n+1) + diphosphate. Its function is as follows. DNA-dependent RNA polymerase catalyzes the transcription of DNA into RNA using the four ribonucleoside triphosphates as substrates. Largest and catalytic core component of RNA polymerase III which synthesizes small RNAs, such as 5S rRNA and tRNAs. Forms the polymerase active center together with the second largest subunit. A single-stranded DNA template strand of the promoter is positioned within the central active site cleft of Pol III. A bridging helix emanates from RPC1 and crosses the cleft near the catalytic site and is thought to promote translocation of Pol III by acting as a ratchet that moves the RNA-DNA hybrid through the active site by switching from straight to bent conformations at each step of nucleotide addition. The protein is DNA-directed RNA polymerase III subunit RPC1 (RPOA3) of Giardia intestinalis (Giardia lamblia).